The sequence spans 289 residues: ATP synthase gamma chain (289 aa).

The protein belongs to the ATPase gamma chain family. In terms of assembly, F-type ATPases have 2 components, CF(1) - the catalytic core - and CF(0) - the membrane proton channel. CF(1) has five subunits: alpha(3), beta(3), gamma(1), delta(1), epsilon(1). CF(0) has three main subunits: a, b and c.

The protein resides in the cell inner membrane. Its function is as follows. Produces ATP from ADP in the presence of a proton gradient across the membrane. The gamma chain is believed to be important in regulating ATPase activity and the flow of protons through the CF(0) complex. This chain is ATP synthase gamma chain, found in Phocaeicola vulgatus (strain ATCC 8482 / DSM 1447 / JCM 5826 / CCUG 4940 / NBRC 14291 / NCTC 11154) (Bacteroides vulgatus).